Reading from the N-terminus, the 971-residue chain is Translation initiation factor IF-2 (971 aa).

Over residues 48–63 (DHLRKSHGATDGDKRK) the composition is skewed to basic and acidic residues. 2 disordered regions span residues 48–86 (DHLR…ARTI) and 100–381 (DDVA…STFQ). The span at 105–114 (GADQGQAQVA) shows a compositional bias: low complexity. Positions 121 to 181 (ELKRREEEAR…EEEAATKRAA (61 aa)) are enriched in basic and acidic residues. Low complexity predominate over residues 182-202 (AEVAAAQQQAAAQQAAAEQEA). Over residues 210–261 (DEARAAAERAAQREAAKKAEDAAREAADKARAEQEEISKRRAAAEAEARAIR) the composition is skewed to basic and acidic residues. A compositionally biased stretch (pro residues) spans 277 to 286 (PPKPVEPPKP). Positions 304–326 (ARPAVKKPAGAAAPATTQAPAGA) are enriched in low complexity. Positions 356-369 (SSGGVDRGWRGGPK) are enriched in gly residues. The tr-type G domain occupies 471–640 (PRPPVVTVMG…LLQAEVLELK (170 aa)). Positions 480–487 (GHVDHGKT) are G1. 480–487 (GHVDHGKT) is a GTP binding site. Residues 505 to 509 (GITQH) form a G2 region. The segment at 526–529 (DTPG) is G3. GTP-binding positions include 526–530 (DTPGH) and 580–583 (NKID). Positions 580–583 (NKID) are G4. The tract at residues 616 to 618 (SAK) is G5.

The protein belongs to the TRAFAC class translation factor GTPase superfamily. Classic translation factor GTPase family. IF-2 subfamily.

Its subcellular location is the cytoplasm. Functionally, one of the essential components for the initiation of protein synthesis. Protects formylmethionyl-tRNA from spontaneous hydrolysis and promotes its binding to the 30S ribosomal subunits. Also involved in the hydrolysis of GTP during the formation of the 70S ribosomal complex. The sequence is that of Translation initiation factor IF-2 from Burkholderia orbicola (strain AU 1054).